A 434-amino-acid polypeptide reads, in one-letter code: Ribosomal protein uS12 methylthiotransferase RimO (434 aa).

An MTTase N-terminal domain is found at 1 to 107 (MHLGCEKNLV…ILNVLQRIEQ (107 aa)). Residues cysteine 5, cysteine 41, cysteine 70, cysteine 145, cysteine 149, and cysteine 152 each contribute to the [4Fe-4S] cluster site. Residues 131-360 (TTGKAVAYLK…ISIQQPIAEL (230 aa)) enclose the Radical SAM core domain. Residues 363–434 (QNWIGRTVDV…DLYDLTGQVV (72 aa)) enclose the TRAM domain.

It belongs to the methylthiotransferase family. RimO subfamily. [4Fe-4S] cluster is required as a cofactor.

The protein localises to the cytoplasm. It catalyses the reaction L-aspartate(89)-[ribosomal protein uS12]-hydrogen + (sulfur carrier)-SH + AH2 + 2 S-adenosyl-L-methionine = 3-methylsulfanyl-L-aspartate(89)-[ribosomal protein uS12]-hydrogen + (sulfur carrier)-H + 5'-deoxyadenosine + L-methionine + A + S-adenosyl-L-homocysteine + 2 H(+). Catalyzes the methylthiolation of an aspartic acid residue of ribosomal protein uS12. The polypeptide is Ribosomal protein uS12 methylthiotransferase RimO (Prochlorococcus marinus (strain SARG / CCMP1375 / SS120)).